We begin with the raw amino-acid sequence, 386 residues long: MAEEEKMRRQLVLAKPFSLEDEKDSELTASSVIRKILSLIKTVRPGSDLTNFQLPPQLILPRSRLQCYGEMIYSFGGQDLLGECSRRNIPIERLKSVVTWNISTLRPVVVGMSPYNPILGETHHVSNGYINVLTEQVMHHPPVSALHATHEQENIDVTWCQYFTPKFRGAYVDVEVNGKRIMKLLHHKETYEMDQPRLIMKFLPAPGAHWAGKVKIKCPETDLEAELHLISDSFIERFRGNNNRSIKGKIFESSSGNQLYNIFGHWDRTVMAKNLKTGGLEVIYNANENITGLKPPTVKNLQEVMESESTIVWSEVSEGILKKDWERAREAKILVEEKQREALKQREASGESWVPKHFSVVKDGKDWHCSPLQPTVPRAPLVITEK.

It belongs to the OSBP family. As to expression, expressed in roots, stems and flowers.

May be involved in the transport of sterols. The sequence is that of Oxysterol-binding protein-related protein 4A (ORP4A) from Arabidopsis thaliana (Mouse-ear cress).